We begin with the raw amino-acid sequence, 429 residues long: uncharacterized protein (429 aa).

A run of 10 helical transmembrane segments spans residues 26-46 (VALT…HDIF), 51-71 (TGID…VGVL), 99-119 (LVLV…VLLI), 135-155 (TSFL…TLVG), 173-193 (FMLH…AVLP), 223-243 (LLVK…AHPV), 278-298 (TLLF…TGVV), 311-331 (GNIV…SGII), 361-381 (WWAL…GASA), and 407-427 (VVTA…YFVL).

The protein belongs to the CitM (TC 2.A.11) transporter family.

It localises to the cell membrane. This is an uncharacterized protein from Mycobacterium tuberculosis (strain ATCC 25618 / H37Rv).